The chain runs to 49 residues: MRVKVALKCSQCGNKNYYTTRNKDKRAKLELRKYCPKCNAHTIHTETKA.

The protein belongs to the bacterial ribosomal protein bL33 family.

The chain is Large ribosomal subunit protein bL33 (rpmG) from Thermotoga maritima (strain ATCC 43589 / DSM 3109 / JCM 10099 / NBRC 100826 / MSB8).